The sequence spans 960 residues: Dynamin-like GTPase OPA1, mitochondrial (960 aa).

A mitochondrion-targeting transit peptide spans 1–87 (MWRLRRAAVA…IKYGYQPRRN (87 aa)). Residues 88-96 (FWPARLATR) are Mitochondrial matrix-facing. Residues 97–113 (LLKLRYLILGSAVGGGY) traverse the membrane as a helical segment. Residues 114–770 (TAKKTFDQWK…NAIENMVGPD (657 aa)) lie on the Mitochondrial intermembrane side of the membrane. Short sequence motifs (LQQQIQ motif) lie at residues 181–186 (DFFTSG) and 217–222 (QLQEEL). The stretch at 210–254 (SDKEKIDQLQEELLHTQLKYQRILERLEKENKELRKLVLQKDDKG) forms a coiled coil. An N6-acetyllysine modification is found at K228. The LQQQIQ motif signature appears at 235–240 (RLEKEN). In terms of domain architecture, Dynamin-type G spans 285–561 (QDHLPRVVVV…FWKMVRESVE (277 aa)). Residues 295 to 302 (GDQSAGKT) form a G1 motif region. Residues S298, G300, K301, T302, S303, and G317 each contribute to the GTP site. Residue T302 participates in Mg(2+) binding. A G2 motif region spans residues 321–324 (MMTR). Residues T323 and D398 each coordinate Mg(2+). The interval 398-401 (DLPG) is G3 motif. Residues 467 to 470 (TKVD) form a G4 motif region. 5 residues coordinate GTP: K468, D470, T503, G506, and N507. The segment at 501–504 (VVTG) is G5 motif. Stalk region stretches follow at residues 589–836 (DRNE…IKDT) and 874–928 (CNDV…IKLL). The segment at 736–856 (SDKQQWDAAI…KTALNHCNLC (121 aa)) is paddle region. The stretch at 771-781 (WKKRWLYWKNR) is an intramembrane region. Topologically, residues 782–960 (TQEQCVHNET…AFIEALHQEK (179 aa)) are mitochondrial intermembrane. C856 and C874 form a disulfide bridge. Positions 895 to 960 (RQQLTNTEVR…AFIEALHQEK (66 aa)) form a coiled coil.

It belongs to the TRAFAC class dynamin-like GTPase superfamily. Dynamin/Fzo/YdjA family. In terms of assembly, oligomeric complex consisting of membrane-bound and soluble forms of OPA1. Interacts with RCC1L; RCC1L acts as a guanine nucleotide exchange factor (GEF) for OPA1 by exchanging bound GDP for free GTP. Interacts with CHCHD3 and IMMT; these interactions occur preferentially with soluble OPA1 forms. Interacts with PRELID1. Cleaved by OMA1 or YME1L downstream of the transmembrane region in response to different signals to generate soluble forms. Cleaved by OMA1 at position S1 following stress conditions, generating the short soluble form (Dynamin-like GTPase OPA1, short form; S-OPA1). AFG3L2 is involved in the regulation of OMA1-dependent processing of OPA1. PARL-dependent proteolytic processing releases an antiapoptotic soluble form not required for mitochondrial fusion. In terms of processing, cleavage at position S2 by YME1L is required to mediate oxidative phosphorylation (OXPHOS)-induced mitochondrial fusion. Cleavage occurs in the sequence motif Leu-Gln-Gln-Gln-Ile-Gln (LQQQIQ). Post-translationally, cleavage at position S2 by YME1L is required to mediate oxidative phosphorylation (OXPHOS)-induced mitochondrial fusion. Cleavage occurs in the sequence motif Leu-Gln-Gln-Gln-Ile-Gln (LQQQIQ). Cleavage at position S3 by YME1L is required for membrane tubulation. Cleavage at position S3 by YME1L is required for membrane tubulation. In terms of tissue distribution, highly expressed in retina. Also expressed in brain, testis, heart and skeletal muscle. Low levels of all isoforms expressed in a variety of tissues. Expressed in retina, skeletal muscle, heart, lung, ovary, colon, thyroid gland, leukocytes and fetal brain. Low levels of all isoforms expressed in a variety of tissues. As to expression, isoform 2 expressed in colon, liver, kidney, thyroid gland and leukocytes.

It is found in the mitochondrion inner membrane. Its subcellular location is the mitochondrion intermembrane space. The enzyme catalyses GTP + H2O = GDP + phosphate + H(+). With respect to regulation, activated by guanine nucleotide exchange factor RCC1L. Its function is as follows. Dynamin-related GTPase that is essential for normal mitochondrial morphology by mediating fusion of the mitochondrial inner membranes, regulating cristae morphology and maintaining respiratory chain function. Exists in two forms: the transmembrane, long form (Dynamin-like GTPase OPA1, long form; L-OPA1), which is tethered to the inner mitochondrial membrane, and the short soluble form (Dynamin-like GTPase OPA1, short form; S-OPA1), which results from proteolytic cleavage and localizes in the intermembrane space. Both forms (L-OPA1 and S-OPA1) cooperate to catalyze the fusion of the mitochondrial inner membrane. The equilibrium between L-OPA1 and S-OPA1 is essential: excess levels of S-OPA1, produced by cleavage by OMA1 following loss of mitochondrial membrane potential, lead to an impaired equilibrium between L-OPA1 and S-OPA1, inhibiting mitochondrial fusion. The balance between L-OPA1 and S-OPA1 also influences cristae shape and morphology. Involved in remodeling cristae and the release of cytochrome c during apoptosis. Proteolytic processing by PARL in response to intrinsic apoptotic signals may lead to disassembly of OPA1 oligomers and release of the caspase activator cytochrome C (CYCS) into the mitochondrial intermembrane space. Acts as a regulator of T-helper Th17 cells, which are characterized by cells with fused mitochondria with tight cristae, by mediating mitochondrial membrane remodeling: OPA1 is required for interleukin-17 (IL-17) production. Its role in mitochondrial morphology is required for mitochondrial genome maintenance. In terms of biological role, constitutes the transmembrane long form (L-OPA1) that plays a central role in mitochondrial inner membrane fusion and cristae morphology. L-OPA1 and the soluble short form (S-OPA1) form higher-order helical assemblies that coordinate the fusion of mitochondrial inner membranes. Inner membrane-anchored L-OPA1 molecules initiate membrane remodeling by recruiting soluble S-OPA1 to rapidly polymerize into a flexible cylindrical scaffold encaging the mitochondrial inner membrane. Once at the membrane surface, the formation of S-OPA1 helices induce bilayer curvature. OPA1 dimerization through the paddle region, which inserts into cardiolipin-containing membrane, promotes GTP hydrolysis and the helical assembly of a flexible OPA1 lattice on the membrane, which drives membrane curvature and mitochondrial fusion. Plays a role in the maintenance and remodeling of mitochondrial cristae, some invaginations of the mitochondrial inner membrane that provide an increase in the surface area. Probably acts by forming helical filaments at the inside of inner membrane tubes with the shape and dimensions of crista junctions. The equilibrium between L-OPA1 and S-OPA1 influences cristae shape and morphology: increased L-OPA1 levels promote cristae stacking and elongated mitochondria, while increased S-OPA1 levels correlated with irregular cristae packing and round mitochondria shape. Functionally, constitutes the soluble short form (S-OPA1) generated by cleavage by OMA1, which plays a central role in mitochondrial inner membrane fusion and cristae morphology. The transmembrane long form (L-OPA1) and the S-OPA1 form higher-order helical assemblies that coordinate the fusion of mitochondrial inner membranes. Inner membrane-anchored L-OPA1 molecules initiate membrane remodeling by recruiting soluble S-OPA1 to rapidly polymerize into a flexible cylindrical scaffold encaging the mitochondrial inner membrane. Once at the membrane surface, the formation of S-OPA1 helices induce bilayer curvature. OPA1 dimerization through the paddle region, which inserts into cardiolipin-containing membrane, promotes GTP hydrolysis and the helical assembly of a flexible OPA1 lattice on the membrane, which drives membrane curvature and mitochondrial fusion. Excess levels of S-OPA1 produced by cleavage by OMA1 following stress conditions that induce loss of mitochondrial membrane potential, lead to an impaired equilibrium between L-OPA1 and S-OPA1, thereby inhibiting mitochondrial fusion. Involved in mitochondrial safeguard in response to transient mitochondrial membrane depolarization by mediating flickering: cleavage by OMA1 leads to excess production of S-OPA1, preventing mitochondrial hyperfusion. Plays a role in the maintenance and remodeling of mitochondrial cristae, some invaginations of the mitochondrial inner membrane that provide an increase in the surface area. Probably acts by forming helical filaments at the inside of inner membrane tubes with the shape and dimensions of crista junctions. The equilibrium between L-OPA1 and S-OPA1 influences cristae shape and morphology: increased L-OPA1 levels promote cristae stacking and elongated mitochondria, while increased S-OPA1 levels correlated with irregular cristae packing and round mitochondria shape. Coexpression of isoform 1 with shorter alternative products is required for optimal activity in promoting mitochondrial fusion. Its function is as follows. Isoforms that contain the alternative exon 4b are required for mitochondrial genome maintenance, possibly by anchoring the mitochondrial nucleoids to the inner mitochondrial membrane. The protein is Dynamin-like GTPase OPA1, mitochondrial of Homo sapiens (Human).